Consider the following 1268-residue polypeptide: MSAPAGSSHPAASARIPPKFGGAAVSGAAAPAGPGAGPAPHQQNGPAQNQMQVPSGYGLHHQNYIAPSGHYSQGPGKMTSLPLDTQCGDYYSALYTVPTQNVTPNTVNQQPGAQQLYSRGPPAPHIVGSTLGSFQGAASSASHLHTSASQPYSSFVNHYNSPAMYSASSSVASQGFPSTCGHYAMSTVSNAAYPSVSYPSLPAGDTYGQMFTSQNAPTVRPVKDNSFSGQNTAISHPSPLPPLPSQQHHQQQSLSGYSTLTWSSPGLPSTQDNLIRNHTGSLAVANNNPTITVADSLSCPVMQNVQPPKSSPVVSTVLSGSSGSSSTRTPPTANHPVEPVTSVTQPSELLQQKGVQYGEYVNNQASSAPTPLSSTSDDEEEEEEDEEAGVDSSSTTSSASPMPNSYDALEGGSYPDMLSSSASSPAPDPAPEPDPASAPAPASAPAPVVPQPSKMAKPFGYGYPTLQPGYQNATAPLISGVQPSNPVYSGFQQYPQQYPGVNQLSSSIGGLSLQSSPQPESLRPVNLTQERNILPMTPVWAPVPNLNADLKKLNCSPDSFRCTLTNIPQTQALLNKAKLPLGLLLHPFRDLTQLPVITSNTIVRCRSCRTYINPFVSFIDQRRWKCNLCYRVNDVPEEFMYNPLTRSYGEPHKRPEVQNSTVEFIASSDYMLRPPQPAVYLFVLDVSHNAVEAGYLTILCQSLLENLDKLPGDSRTRIGFMTFDSTIHFYNLQEGLSQPQMLIVSDIDDVFLPTPDSLLVNLYESKELIKDLLNALPNMFTNTRETHSALGPALQAAFKLMSPTGGRVSVFQTQLPSLGAGLLQSREDPNQRSSTKVVQHLGPATDFYKKLALDCSGQQTAVDLFLLSSQYSDLASLACMSKYSAGCIYYYPSFHYTHNPSQAEKLQKDLKRYLTRKIGFEAVMRIRCTKGLSMHTFHGNFFVRSTDLLSLANINPDAGFAVQLSIEESLTDTSLVCFQTALLYTSSKGERRIRVHTLCLPVVSSLADVYAGVDVQAAICLLANMAVDRSVSSSLSDARDALVNAVVDSLSAYGSTVSNLQHSALMAPSSLKLFPLYVLALLKQKAFRTGTSTRLDDRVYAMCQIKSQPLVHLMKMIHPNLYRIDRLTDEGAVHVNDRIVPQPPLQKLSAEKLTREGAFLMDCGSVFYIWVGKGCDNNFIEDVLGYTNFASIPQKMTHLPELDTLSSERARSFITWLRDSRPLSPILHIVKDESPAKAEFFQHLIEDRTEAAFSYYEFLLHVQQQICK.

2 stretches are compositionally biased toward low complexity: residues 1–14 (MSAP…AASA) and 21–48 (GGAA…GPAQ). Disordered stretches follow at residues 1 to 71 (MSAP…SGHY), 216 to 263 (APTV…LTWS), 303 to 345 (QNVQ…SVTQ), and 362 to 451 (NNQA…VVPQ). Position 2 is an N-acetylserine (S2). Position 55 is a phosphoserine (S55). Positions 225–234 (NSFSGQNTAI) are enriched in polar residues. Composition is skewed to low complexity over residues 245-255 (SQQHHQQQSLS), 311-332 (SPVV…TPPT), and 365-375 (ASSAPTPLSST). Position 329 is a phosphothreonine (T329). Residues 376–389 (SDDEEEEEEDEEAG) are compositionally biased toward acidic residues. The segment covering 426–450 (APDPAPEPDPASAPAPASAPAPVVP) has biased composition (pro residues). The Zn(2+) site is built by C605, C608, C626, and C629. The zinc finger-like stretch occupies residues 605–629 (CRSCRTYINPFVSFIDQRRWKCNLC). A Gelsolin-like repeat occupies 1141–1213 (PQPPLQKLSA…TLSSERARSF (73 aa)). At S1224 the chain carries Phosphoserine.

This sequence belongs to the SEC23/SEC24 family. SEC24 subfamily. In terms of assembly, COPII is composed of at least five proteins: the Sec23/24 complex, the Sec13/31 complex and SAR1. Interacts with STING1; promoting STING1 translocation to COPII vesicles in a STEEP1-dependent manner. Interacts with RNF139. Interacts with TMED2 and TMED10. Interacts with CNIH4.

It is found in the cytoplasmic vesicle. It localises to the COPII-coated vesicle membrane. The protein localises to the endoplasmic reticulum membrane. The protein resides in the cytoplasm. Its subcellular location is the cytosol. Its function is as follows. Component of the coat protein complex II (COPII) which promotes the formation of transport vesicles from the endoplasmic reticulum (ER). The coat has two main functions, the physical deformation of the endoplasmic reticulum membrane into vesicles and the selection of cargo molecules for their transport to the Golgi complex. Plays a central role in cargo selection within the COPII complex and together with SEC24A may have a different specificity compared to SEC24C and SEC24D. May package preferentially cargos with cytoplasmic DxE or LxxLE motifs and may also recognize conformational epitopes. The sequence is that of Protein transport protein Sec24B from Homo sapiens (Human).